The chain runs to 588 residues: 3-methylmercaptopropionyl-CoA dehydrogenase (588 aa).

Catalysis depends on Glu-435, which acts as the Proton acceptor.

Belongs to the acyl-CoA dehydrogenase family. It depends on FAD as a cofactor.

The enzyme catalyses 3-(methylsulfanyl)propanoyl-CoA + oxidized [electron-transfer flavoprotein] + H(+) = 3-(methylsulfanyl)acryloyl-CoA + reduced [electron-transfer flavoprotein]. Involved in the assimilation of dimethylsulphoniopropionate (DMSP), an important compound in the fixation of carbon in marine phytoplankton, by mediating the conversion of 3-(methylthio)propanoyl-CoA (MMPA-CoA) to 3-(methylthio)acryloyl-CoA (MTA-CoA). This is 3-methylmercaptopropionyl-CoA dehydrogenase from Ruegeria pomeroyi (strain ATCC 700808 / DSM 15171 / DSS-3) (Silicibacter pomeroyi).